The sequence spans 140 residues: MASSLITSAVIVVVLSLVLGSVEQVSGLRHVPKSPKTTDVKHPDFLVTIEPKPTILIPGVGRFLLPPKCKKPFYPYNPVTGAPLTGGGIPSYNGGQGAGPHTQLPGGDDTLVPNPGFEAPTPTIGAGTGSNGQVPPVPLP.

The signal sequence occupies residues 1–21 (MASSLITSAVIVVVLSLVLGS). The segment covering 85–98 (TGGGIPSYNGGQGA) has biased composition (gly residues). The interval 85–140 (TGGGIPSYNGGQGAGPHTQLPGGDDTLVPNPGFEAPTPTIGAGTGSNGQVPPVPLP) is disordered.

In terms of tissue distribution, inflorescence.

The protein resides in the secreted. The protein localises to the cell wall. The chain is Putative cell wall protein from Arabidopsis thaliana (Mouse-ear cress).